A 125-amino-acid chain; its full sequence is Fluoride-specific ion channel FluC (125 aa).

4 helical membrane passes run 5–25 (FVFI…LAGF), 33–53 (FFPF…GFLW), 69–89 (FVLV…LETG), and 101–121 (IVNL…GIVL). Positions 76 and 79 each coordinate Na(+).

It belongs to the fluoride channel Fluc/FEX (TC 1.A.43) family.

It is found in the cell inner membrane. It catalyses the reaction fluoride(in) = fluoride(out). With respect to regulation, na(+) is not transported, but it plays an essential structural role and its presence is essential for fluoride channel function. In terms of biological role, fluoride-specific ion channel. Important for reducing fluoride concentration in the cell, thus reducing its toxicity. In Desulforapulum autotrophicum (strain ATCC 43914 / DSM 3382 / VKM B-1955 / HRM2) (Desulfobacterium autotrophicum), this protein is Fluoride-specific ion channel FluC.